A 256-amino-acid chain; its full sequence is Small ribosomal subunit protein eS1 (256 aa).

Residue alanine 2 is modified to N-acetylalanine; partial.

Belongs to the eukaryotic ribosomal protein eS1 family. In terms of assembly, component of the small ribosomal subunit. Mature ribosomes consist of a small (40S) and a large (60S) subunit. The 40S subunit contains about 33 different proteins and 1 molecule of RNA (18S). The 60S subunit contains about 49 different proteins and 3 molecules of RNA (25S, 5.8S and 5S).

Its subcellular location is the cytoplasm. This is Small ribosomal subunit protein eS1 from Candida tropicalis (strain ATCC MYA-3404 / T1) (Yeast).